The sequence spans 184 residues: mRNA transport regulator MTR2 (184 aa).

The disordered stretch occupies residues 111 to 135 (KMGQDATVPIQPNNTGNRNRPNDMN). Over residues 120 to 129 (IQPNNTGNRN) the composition is skewed to polar residues. At Thr125 the chain carries Phosphothreonine.

As to quaternary structure, interacts with MEX67.

Its subcellular location is the nucleus. Its function is as follows. Affects mRNA transport from the nucleus to the cytoplasm. The protein is mRNA transport regulator MTR2 (MTR2) of Saccharomyces cerevisiae (strain ATCC 204508 / S288c) (Baker's yeast).